The primary structure comprises 520 residues: Zinc finger and BTB domain-containing protein 18 (520 aa).

The BTB domain maps to 24 to 91 (CDCTVLVGDA…MYEGILQFKG (68 aa)). The interval 121–140 (ATTDSTKKEEDTSSFSDKVE) is disordered. 4 consecutive C2H2-type zinc fingers follow at residues 368-390 (FMCPLCNKVFPSPHILQIHLSTH), 408-430 (PTCSLCGKTFSCMYTLKRHERTH), 436-458 (YTCTQCGKSFQYSHNLSRHAVVH), and 464-487 (HACKWCERRFTQSGDLYRHIRKFH).

Belongs to the krueppel C2H2-type zinc-finger protein family. ZBTB18 subfamily.

It is found in the nucleus. Transcriptional repressor that plays a role in various developmental processes. Specifically binds the consensus DNA sequence 5'-[AC]ACATCTG[GT][AC]-3' which contains the E box core, and acts by recruiting chromatin remodeling multiprotein complexes. This is Zinc finger and BTB domain-containing protein 18 (zbtb18) from Xenopus laevis (African clawed frog).